Consider the following 87-residue polypeptide: U3-theraphotoxin-Cg1c (87 aa).

The N-terminal stretch at 1–23 (MRTFTLIAILTCAVLVIFHVSAA) is a signal peptide. Positions 24-51 (EELEAQDVIQPEDIFTGVATLEEDRIFE) are excised as a propeptide. Cystine bridges form between C52–C65, C56–C79, and C73–C84.

The protein belongs to the neurotoxin 12 (Hwtx-2) family. 03 (juruin) subfamily. In terms of tissue distribution, expressed by the venom gland.

It localises to the secreted. Probable ion channel inhibitor. The protein is U3-theraphotoxin-Cg1c of Chilobrachys guangxiensis (Chinese earth tiger tarantula).